Reading from the N-terminus, the 117-residue chain is Large ribosomal subunit protein bL20 (117 aa).

The protein belongs to the bacterial ribosomal protein bL20 family.

In terms of biological role, binds directly to 23S ribosomal RNA and is necessary for the in vitro assembly process of the 50S ribosomal subunit. It is not involved in the protein synthesizing functions of that subunit. This chain is Large ribosomal subunit protein bL20, found in Crocosphaera subtropica (strain ATCC 51142 / BH68) (Cyanothece sp. (strain ATCC 51142)).